Reading from the N-terminus, the 90-residue chain is Probable Fe(2+)-trafficking protein (90 aa).

Belongs to the Fe(2+)-trafficking protein family.

In terms of biological role, could be a mediator in iron transactions between iron acquisition and iron-requiring processes, such as synthesis and/or repair of Fe-S clusters in biosynthetic enzymes. This is Probable Fe(2+)-trafficking protein from Cupriavidus pinatubonensis (strain JMP 134 / LMG 1197) (Cupriavidus necator (strain JMP 134)).